The sequence spans 459 residues: Ribulose bisphosphate carboxylase/oxygenase activase, chloroplastic (459 aa).

Residue 164–171 (GGKGQGKS) participates in ATP binding.

It belongs to the RuBisCO activase family.

The protein localises to the plastid. It is found in the chloroplast stroma. Functionally, activation of RuBisCO (ribulose-1,5-bisphosphate carboxylase/oxygenase; EC 4.1.1.39) involves the ATP-dependent carboxylation of the epsilon-amino group of lysine leading to a carbamate structure. In Solanum pennellii (Tomato), this protein is Ribulose bisphosphate carboxylase/oxygenase activase, chloroplastic.